We begin with the raw amino-acid sequence, 644 residues long: Core protein VP4 (644 aa).

This sequence belongs to the orbivirus VP4 family.

Its subcellular location is the virion. The VP4 protein is one of the five proteins (with VP1, VP3, VP6 and VP7) which form the inner capsid of the virus. The protein is Core protein VP4 (Segment-4) of Bluetongue virus 2 (isolate USA) (BTV 2).